A 154-amino-acid polypeptide reads, in one-letter code: Putative glutamine amidotransferase-like protein RP712 (154 aa).

The Glutamine amidotransferase type-1 domain occupies Met1–Lys94.

In Rickettsia prowazekii (strain Madrid E), this protein is Putative glutamine amidotransferase-like protein RP712.